The chain runs to 478 residues: 9-divinyl ether synthase (478 aa).

Cysteine 431 serves as a coordination point for heme.

Belongs to the cytochrome P450 family. 9-divinyl ether synthase subfamily.

The catalysed reaction is (9S)-hydroperoxy-(10E,12Z)-octadecadienoate = colneleate + H2O. Involved in the biosynthesis of the anti-fungal toxins colneleic acid and colnelenic acid. The sequence is that of 9-divinyl ether synthase (DES) from Capsicum annuum (Capsicum pepper).